The following is a 351-amino-acid chain: N(4)-bis(aminopropyl)spermidine synthase (351 aa).

The protein belongs to the branched-chain polyamine synthase family.

The protein localises to the cytoplasm. It carries out the reaction 2 S-adenosyl 3-(methylsulfanyl)propylamine + spermidine = N(4)-bis(aminopropyl)spermidine + 2 S-methyl-5'-thioadenosine + 2 H(+). It functions in the pathway amine and polyamine biosynthesis. In terms of biological role, involved in the biosynthesis of branched-chain polyamines, which support the growth of thermophiles under high-temperature conditions. Catalyzes the sequential condensation of spermidine with the aminopropyl groups of decarboxylated S-adenosylmethionines to produce N(4)-bis(aminopropyl)spermidine via N(4)-aminopropylspermidine. Can also use spermine to produce N(4)-aminopropylspermine. This is N(4)-bis(aminopropyl)spermidine synthase from Thermococcus kodakarensis (strain ATCC BAA-918 / JCM 12380 / KOD1) (Pyrococcus kodakaraensis (strain KOD1)).